The primary structure comprises 218 residues: Transmembrane gamma-carboxyglutamic acid protein 1 (218 aa).

Residues 1–20 (MGRVFLTGEKANSILKRYPR) constitute a propeptide that is removed on maturation. The region spanning 21-66 (ANGFFEEIRQGNIERECKEEFCTFEEAREAFENNEKTKEFWSTYTK) is the Gla domain. At 21 to 83 (ANGFFEEIRQ…RGSDWFQFYL (63 aa)) the chain is on the extracellular side. Cysteine 37 and cysteine 42 are oxidised to a cystine. Residues 84–106 (TFPLIFGLFIILLVIFLIWRCFL) traverse the membrane as a helical segment. At 107–218 (RNKTRRQTVT…PMVPVVTTIK (112 aa)) the chain is on the cytoplasmic side. Positions 161 to 195 (TRLSNCDPPPTYEEATGQVNLQRSETEPHLDPPPE) are disordered.

Gla residues are produced after subsequent post-translational modifications of glutamate by a vitamin K-dependent gamma-carboxylase. Highly expressed in the spinal cord.

It localises to the membrane. This is Transmembrane gamma-carboxyglutamic acid protein 1 (PRRG1) from Homo sapiens (Human).